Consider the following 530-residue polypeptide: Bifunctional purine biosynthesis protein PurH (530 aa).

The region spanning threonine 2–valine 150 is the MGS-like domain.

It belongs to the PurH family.

It carries out the reaction (6R)-10-formyltetrahydrofolate + 5-amino-1-(5-phospho-beta-D-ribosyl)imidazole-4-carboxamide = 5-formamido-1-(5-phospho-D-ribosyl)imidazole-4-carboxamide + (6S)-5,6,7,8-tetrahydrofolate. It catalyses the reaction IMP + H2O = 5-formamido-1-(5-phospho-D-ribosyl)imidazole-4-carboxamide. Its pathway is purine metabolism; IMP biosynthesis via de novo pathway; 5-formamido-1-(5-phospho-D-ribosyl)imidazole-4-carboxamide from 5-amino-1-(5-phospho-D-ribosyl)imidazole-4-carboxamide (10-formyl THF route): step 1/1. It functions in the pathway purine metabolism; IMP biosynthesis via de novo pathway; IMP from 5-formamido-1-(5-phospho-D-ribosyl)imidazole-4-carboxamide: step 1/1. This chain is Bifunctional purine biosynthesis protein PurH, found in Bradyrhizobium diazoefficiens (strain JCM 10833 / BCRC 13528 / IAM 13628 / NBRC 14792 / USDA 110).